The following is a 341-amino-acid chain: Serpentine receptor class epsilon-8 (341 aa).

7 helical membrane-spanning segments follow: residues 37–57, 64–86, 101–123, 143–163, 169–189, 235–255, and 264–284; these read VGFLVFSWIEFLYLFYLFIFI, LTFLFMNYGGQYFCSMLSRCIIV, WILVANFARTVCLFIAMYILPIF, IWVSLMILSIFHPLVFASAIA, IPVVVHVISFFIVNIIGYIGI, VQISILFFNIGCCSILLMDHF, and WSYVCFNFFALVYGITVPIIL.

The protein belongs to the nematode receptor-like protein sre family.

It is found in the membrane. The sequence is that of Serpentine receptor class epsilon-8 (sre-8) from Caenorhabditis elegans.